Reading from the N-terminus, the 63-residue chain is Large ribosomal subunit protein uL29 (63 aa).

It belongs to the universal ribosomal protein uL29 family.

This chain is Large ribosomal subunit protein uL29, found in Psychromonas ingrahamii (strain DSM 17664 / CCUG 51855 / 37).